The sequence spans 334 residues: Holliday junction branch migration complex subunit RuvB (334 aa).

A large ATPase domain (RuvB-L) region spans residues 1–182 (MNERMVDQSM…FGVHLRLEYY (182 aa)). ATP is bound by residues L21, R22, G63, K66, T67, T68, 129 to 131 (EDF), R172, Y182, and R219. Position 67 (T67) interacts with Mg(2+). The interval 183–253 (NESDLKEIII…TTKHALGLLQ (71 aa)) is small ATPAse domain (RuvB-S). A head domain (RuvB-H) region spans residues 256–334 (QHGLDYIDHK…HFAKSNEERE (79 aa)). DNA is bound by residues R292, R311, and R316.

This sequence belongs to the RuvB family. Homohexamer. Forms an RuvA(8)-RuvB(12)-Holliday junction (HJ) complex. HJ DNA is sandwiched between 2 RuvA tetramers; dsDNA enters through RuvA and exits via RuvB. An RuvB hexamer assembles on each DNA strand where it exits the tetramer. Each RuvB hexamer is contacted by two RuvA subunits (via domain III) on 2 adjacent RuvB subunits; this complex drives branch migration. In the full resolvosome a probable DNA-RuvA(4)-RuvB(12)-RuvC(2) complex forms which resolves the HJ.

It is found in the cytoplasm. The enzyme catalyses ATP + H2O = ADP + phosphate + H(+). The RuvA-RuvB-RuvC complex processes Holliday junction (HJ) DNA during genetic recombination and DNA repair, while the RuvA-RuvB complex plays an important role in the rescue of blocked DNA replication forks via replication fork reversal (RFR). RuvA specifically binds to HJ cruciform DNA, conferring on it an open structure. The RuvB hexamer acts as an ATP-dependent pump, pulling dsDNA into and through the RuvAB complex. RuvB forms 2 homohexamers on either side of HJ DNA bound by 1 or 2 RuvA tetramers; 4 subunits per hexamer contact DNA at a time. Coordinated motions by a converter formed by DNA-disengaged RuvB subunits stimulates ATP hydrolysis and nucleotide exchange. Immobilization of the converter enables RuvB to convert the ATP-contained energy into a lever motion, pulling 2 nucleotides of DNA out of the RuvA tetramer per ATP hydrolyzed, thus driving DNA branch migration. The RuvB motors rotate together with the DNA substrate, which together with the progressing nucleotide cycle form the mechanistic basis for DNA recombination by continuous HJ branch migration. Branch migration allows RuvC to scan DNA until it finds its consensus sequence, where it cleaves and resolves cruciform DNA. The polypeptide is Holliday junction branch migration complex subunit RuvB (Staphylococcus aureus (strain bovine RF122 / ET3-1)).